The following is a 480-amino-acid chain: Endothelial transcription factor GATA-2 (480 aa).

Ser-73 is subject to Phosphoserine. Arg-86 carries the post-translational modification Asymmetric dimethylarginine. Residues Ser-166–Lys-208 are disordered. Low complexity predominate over residues Pro-183–Ser-201. Position 192 is a phosphoserine (Ser-192). 2 consecutive GATA-type zinc fingers follow at residues Cys-295–Cys-319 and Cys-349–Cys-373. Residue Lys-389 forms a Glycyl lysine isopeptide (Lys-Gly) (interchain with G-Cter in SUMO2) linkage. Residues Thr-457–Gly-480 form a disordered region.

As to quaternary structure, interacts with BRD3. Interacts with AR and CCAR1. Interacts with MDFIC.

The protein localises to the nucleus. Transcriptional activator which regulates endothelin-1 gene expression in endothelial cells. Binds to the consensus sequence 5'-AGATAG-3'. Plays an important role in the regulation of phagocytosis in alveolar macrophages, particularly during P.carinii infection. This is Endothelial transcription factor GATA-2 from Rattus norvegicus (Rat).